We begin with the raw amino-acid sequence, 433 residues long: Trigger factor (433 aa).

A PPIase FKBP-type domain is found at 161-246 (EDRVVIDFVG…LKKVENIVLP (86 aa)).

It belongs to the FKBP-type PPIase family. Tig subfamily.

The protein localises to the cytoplasm. It catalyses the reaction [protein]-peptidylproline (omega=180) = [protein]-peptidylproline (omega=0). Its function is as follows. Involved in protein export. Acts as a chaperone by maintaining the newly synthesized protein in an open conformation. Functions as a peptidyl-prolyl cis-trans isomerase. The polypeptide is Trigger factor (Actinobacillus pleuropneumoniae serotype 5b (strain L20)).